The primary structure comprises 152 residues: Large ribosomal subunit protein uL15 (152 aa).

Residues 1-57 (MTSTLNTLKSNSGSRKKKLRKGRGIAAGQGASCGFGMRGQKSRSGRPTRPGFEGGQM) form a disordered region. Residues 14 to 23 (SRKKKLRKGR) are compositionally biased toward basic residues. The segment covering 25 to 37 (IAAGQGASCGFGM) has biased composition (gly residues).

It belongs to the universal ribosomal protein uL15 family. Part of the 50S ribosomal subunit.

Its function is as follows. Binds to the 23S rRNA. This Prochlorococcus marinus (strain MIT 9312) protein is Large ribosomal subunit protein uL15.